The following is a 167-amino-acid chain: Urease accessory protein UreE (167 aa).

Positions 137 to 167 are disordered; that stretch reads ARGAYHAHGGHSHGHDHGHSHGHDHHDHSHD. The segment covering 149–167 has biased composition (basic and acidic residues); that stretch reads HGHDHGHSHGHDHHDHSHD.

Belongs to the UreE family.

Its subcellular location is the cytoplasm. Functionally, involved in urease metallocenter assembly. Binds nickel. Probably functions as a nickel donor during metallocenter assembly. This is Urease accessory protein UreE from Rhizobium rhizogenes (strain K84 / ATCC BAA-868) (Agrobacterium radiobacter).